The sequence spans 293 residues: Short-chain dehydrogenase/reductase PhomF' (293 aa).

Positions 31 and 102 each coordinate NADP(+). Serine 175 functions as the Proton donor in the catalytic mechanism. Residues tyrosine 190, lysine 194, and serine 225 each coordinate NADP(+). Tyrosine 190 acts as the Proton acceptor in catalysis. Residue lysine 194 is the Lowers pKa of active site Tyr of the active site.

It belongs to the short-chain dehydrogenases/reductases (SDR) family.

In terms of biological role, short-chain dehydrogenase/reductase; part of the gene cluster that mediates the biosynthesis of the phomopsins, a group of hexapeptide mycotoxins which infects lupins and causes lupinosis disease in livestock. The role of phomF' within the phomopsins biosynthesis pathway has still to be determined. The pathway starts with the processing of the precursor phomA by several endopeptidases including kexin proteases as well as the cluster-specific S41 family peptidase phomP1 and the oligopeptidase phomG to produce 10 identical copies of the hexapeptide Tyr-Val-Ile-Pro-Ile-Asp. After being excised from the precursor peptide, the core peptides are cyclized and modified post-translationally by enzymes encoded within the gene cluster. The timing and order of proteolysis of the phomA precursor and PTMs are still unknown. Two tyrosinase-like enzymes, phomQ1 and phomQ2, catalyze the chlorination and hydroxylation of Tyr, respectively. PhomYb, is proposed to be involved in the construction of the macrocyclic structure. The other 4 ustYa family proteins may be involved in PTMs that generate the unique structure of phomopsin A. PhomYa is required for the hydroxylation of C-beta of Tyr. PhomYc, phomYd, and phomYe are responsible for the biosynthesis of 2,3-dehydroisoleucine (dIle), 2,3-dehydroaspartic acid (dAsp), and 3,4-dehydroproline (dPro), respectively. While dIle formation by phomYc is indispensable for the installation of dAsp by phomYd, the order of the other PTMs have not been elucidated yet. Most of the biosynthetic enzymes likely have broad substrate specificity, and thus, there might be a metabolic grid from a precursor to phomopsin A. The enzyme(s) responsible for the biosynthesis of 3,4-dehydrovaline (dVal) have also not been identified yet. Finally, phomM acts as an S-adenosylmethionine-dependent alpha-N-methyltransferase that catalyzes two successive N-methylation reactions, converting N-desmethyl-phomopsin A to phomopsin A and phomopsin A further to an N,N-dimethylated congener called phomopsin E. This is Short-chain dehydrogenase/reductase PhomF' from Diaporthe leptostromiformis (Lupinosis disease fungus).